A 475-amino-acid polypeptide reads, in one-letter code: Bifunctional protein HldE (475 aa).

The segment at 1–318 is ribokinase; that stretch reads MMQYSPKFNN…ENAIHHREET (318 aa). Position 195-198 (195-198) interacts with ATP; it reads NMSE. The active site involves Asp-264. The interval 344 to 475 is cytidylyltransferase; it reads MTNGCFDILH…NVIKKIQASK (132 aa).

The protein in the N-terminal section; belongs to the carbohydrate kinase PfkB family. In the C-terminal section; belongs to the cytidylyltransferase family. In terms of assembly, homodimer.

It carries out the reaction D-glycero-beta-D-manno-heptose 7-phosphate + ATP = D-glycero-beta-D-manno-heptose 1,7-bisphosphate + ADP + H(+). It catalyses the reaction D-glycero-beta-D-manno-heptose 1-phosphate + ATP + H(+) = ADP-D-glycero-beta-D-manno-heptose + diphosphate. The protein operates within nucleotide-sugar biosynthesis; ADP-L-glycero-beta-D-manno-heptose biosynthesis; ADP-L-glycero-beta-D-manno-heptose from D-glycero-beta-D-manno-heptose 7-phosphate: step 1/4. It participates in nucleotide-sugar biosynthesis; ADP-L-glycero-beta-D-manno-heptose biosynthesis; ADP-L-glycero-beta-D-manno-heptose from D-glycero-beta-D-manno-heptose 7-phosphate: step 3/4. Its function is as follows. Catalyzes the phosphorylation of D-glycero-D-manno-heptose 7-phosphate at the C-1 position to selectively form D-glycero-beta-D-manno-heptose-1,7-bisphosphate. Catalyzes the ADP transfer from ATP to D-glycero-beta-D-manno-heptose 1-phosphate, yielding ADP-D-glycero-beta-D-manno-heptose. This Actinobacillus pleuropneumoniae serotype 5b (strain L20) protein is Bifunctional protein HldE.